A 634-amino-acid polypeptide reads, in one-letter code: DNA gyrase subunit B (634 aa).

The region spanning 416–530 is the Toprim domain; it reads REIYIVEGDS…NGYIYIAMPP (115 aa). Mg(2+) contacts are provided by glutamate 422, aspartate 495, and aspartate 497.

This sequence belongs to the type II topoisomerase GyrB family. As to quaternary structure, heterotetramer, composed of two GyrA and two GyrB chains. In the heterotetramer, GyrA contains the active site tyrosine that forms a transient covalent intermediate with DNA, while GyrB binds cofactors and catalyzes ATP hydrolysis. It depends on Mg(2+) as a cofactor. The cofactor is Mn(2+). Ca(2+) is required as a cofactor.

The protein localises to the cytoplasm. It carries out the reaction ATP-dependent breakage, passage and rejoining of double-stranded DNA.. In terms of biological role, a type II topoisomerase that negatively supercoils closed circular double-stranded (ds) DNA in an ATP-dependent manner to modulate DNA topology and maintain chromosomes in an underwound state. Negative supercoiling favors strand separation, and DNA replication, transcription, recombination and repair, all of which involve strand separation. Also able to catalyze the interconversion of other topological isomers of dsDNA rings, including catenanes and knotted rings. Type II topoisomerases break and join 2 DNA strands simultaneously in an ATP-dependent manner. The protein is DNA gyrase subunit B of Borreliella burgdorferi (strain ATCC 35210 / DSM 4680 / CIP 102532 / B31) (Borrelia burgdorferi).